The following is a 371-amino-acid chain: 3-dehydroquinate synthase (371 aa).

NAD(+) contacts are provided by residues 114-118 (GVVGD), 138-139 (TT), lysine 151, lysine 160, and 178-181 (TLNT). Residues glutamate 193, histidine 258, and histidine 275 each coordinate Zn(2+).

Belongs to the sugar phosphate cyclases superfamily. Dehydroquinate synthase family. Co(2+) is required as a cofactor. The cofactor is Zn(2+). Requires NAD(+) as cofactor.

It localises to the cytoplasm. The enzyme catalyses 7-phospho-2-dehydro-3-deoxy-D-arabino-heptonate = 3-dehydroquinate + phosphate. Its pathway is metabolic intermediate biosynthesis; chorismate biosynthesis; chorismate from D-erythrose 4-phosphate and phosphoenolpyruvate: step 2/7. Its function is as follows. Catalyzes the conversion of 3-deoxy-D-arabino-heptulosonate 7-phosphate (DAHP) to dehydroquinate (DHQ). This is 3-dehydroquinate synthase from Synechococcus sp. (strain CC9605).